The chain runs to 214 residues: Intermembrane phospholipid transport system binding protein MlaC (214 aa).

The signal sequence occupies residues 1-28; it reads MNLIQLKKWFTILTFVLTAFLVTRTAIA.

It belongs to the MlaC/ttg2D family.

The protein localises to the periplasm. Its function is as follows. Involved in a phospholipid transport pathway that maintains lipid asymmetry in the outer membrane by retrograde trafficking of phospholipids from the outer membrane to the inner membrane. May transfer phospholipid across the periplasmic space and deliver it to the MlaFEDB complex at the inner membrane. The polypeptide is Intermembrane phospholipid transport system binding protein MlaC (Haemophilus influenzae (strain ATCC 51907 / DSM 11121 / KW20 / Rd)).